Reading from the N-terminus, the 597-residue chain is Large ribosomal subunit assembly factor BipA (597 aa).

The region spanning 3–198 is the tr-type G domain; that stretch reads LPIRNVAIIA…AILHHVPPPA (196 aa). Residues 15–20 and 128–131 contribute to the GTP site; these read DHGKTT and NKID.

The protein belongs to the TRAFAC class translation factor GTPase superfamily. Classic translation factor GTPase family. BipA subfamily. In terms of assembly, monomer.

It is found in the cytoplasm. It catalyses the reaction GTP + H2O = GDP + phosphate + H(+). In terms of biological role, a 50S ribosomal subunit assembly protein with GTPase activity, required for 50S subunit assembly at low temperatures, may also play a role in translation. Binds GTP and analogs. Binds the 70S ribosome between the 30S and 50S subunits, in a similar position as ribosome-bound EF-G; it contacts a number of ribosomal proteins, both rRNAs and the A-site tRNA. In Synechocystis sp. (strain ATCC 27184 / PCC 6803 / Kazusa), this protein is Large ribosomal subunit assembly factor BipA.